The primary structure comprises 150 residues: Large ribosomal subunit protein bL9 (150 aa).

It belongs to the bacterial ribosomal protein bL9 family.

Its function is as follows. Binds to the 23S rRNA. This Polynucleobacter necessarius subsp. necessarius (strain STIR1) protein is Large ribosomal subunit protein bL9.